A 540-amino-acid chain; its full sequence is Bifunctional pantoate ligase/cytidylate kinase (540 aa).

The tract at residues methionine 1–leucine 280 is pantoate--beta-alanine ligase. Methionine 28–histidine 35 is an ATP binding site. The active-site Proton donor is the histidine 35. Glutamine 59 is a (R)-pantoate binding site. Glutamine 59 is a beta-alanine binding site. Glycine 150–aspartate 153 contacts ATP. Residue glutamine 156 coordinates (R)-pantoate. ATP contacts are provided by residues valine 179 and tyrosine 187–arginine 190. Positions leucine 281 to isoleucine 540 are cytidylate kinase. Residues aspartate 288 to arginine 307 are disordered.

It in the N-terminal section; belongs to the pantothenate synthetase family. The protein in the C-terminal section; belongs to the cytidylate kinase family. Type 1 subfamily.

The protein localises to the cytoplasm. The catalysed reaction is (R)-pantoate + beta-alanine + ATP = (R)-pantothenate + AMP + diphosphate + H(+). It carries out the reaction CMP + ATP = CDP + ADP. The enzyme catalyses dCMP + ATP = dCDP + ADP. It participates in cofactor biosynthesis; (R)-pantothenate biosynthesis; (R)-pantothenate from (R)-pantoate and beta-alanine: step 1/1. Catalyzes the condensation of pantoate with beta-alanine in an ATP-dependent reaction via a pantoyl-adenylate intermediate. In terms of biological role, catalyzes the transfer of a phosphate group from ATP to either CMP or dCMP to form CDP or dCDP and ADP, respectively. The polypeptide is Bifunctional pantoate ligase/cytidylate kinase (Synechococcus sp. (strain JA-3-3Ab) (Cyanobacteria bacterium Yellowstone A-Prime)).